The sequence spans 186 residues: Probable nicotinate-nucleotide adenylyltransferase (186 aa).

It belongs to the NadD family.

The catalysed reaction is nicotinate beta-D-ribonucleotide + ATP + H(+) = deamido-NAD(+) + diphosphate. The protein operates within cofactor biosynthesis; NAD(+) biosynthesis; deamido-NAD(+) from nicotinate D-ribonucleotide: step 1/1. Functionally, catalyzes the reversible adenylation of nicotinate mononucleotide (NaMN) to nicotinic acid adenine dinucleotide (NaAD). The chain is Probable nicotinate-nucleotide adenylyltransferase from Thermus thermophilus (strain ATCC 27634 / DSM 579 / HB8).